Consider the following 524-residue polypeptide: Serine/threonine-protein kinase PAK 2 (524 aa).

A disordered region spans residues methionine 1–glutamate 81. Position 2 is an N-acetylserine (serine 2). 4 positions are modified to phosphoserine: serine 2, serine 20, serine 55, and serine 58. Threonine 60 bears the Phosphothreonine mark. Position 62 is an N6-acetyllysine (lysine 62). Residue serine 64 is modified to Phosphoserine. Residues lysine 67–glutamate 81 show a composition bias toward basic and acidic residues. Positions lysine 69–threonine 112 are GTPase-binding. Positions lysine 69 to glutamine 137 are autoregulatory region. One can recognise a CRIB domain in the interval isoleucine 74–glycine 87. Residue lysine 128 is modified to N6-acetyllysine. A Phosphothreonine modification is found at threonine 134. At tyrosine 139 the chain carries Phosphotyrosine. Residue serine 141 is modified to Phosphoserine. A Phosphothreonine modification is found at threonine 143. Disordered regions lie at residues threonine 143–alanine 164 and threonine 169–aspartate 188. The residue at position 152 (serine 152) is a Phosphoserine. 2 positions are modified to phosphothreonine: threonine 154 and threonine 169. Over residues threonine 169 to threonine 178 the composition is skewed to acidic residues. Serine 197 is modified (phosphoserine). Glycine 213 carries the N-myristoyl glycine; in form PAK-2p34 lipid modification. The short motif at proline 245 to arginine 251 is the Nuclear localization signal element. One can recognise a Protein kinase domain in the interval tyrosine 249–phenylalanine 499. Residues isoleucine 255 to valine 263 and lysine 278 each bind ATP. Arginine 367 acts as the Proton acceptor in catalysis. A Phosphothreonine; by autocatalysis modification is found at threonine 402.

Belongs to the protein kinase superfamily. STE Ser/Thr protein kinase family. STE20 subfamily. As to quaternary structure, interacts tightly with GTP-bound but not GDP-bound CDC42/p21 and RAC1. Interacts with SH3MD4. Interacts with SCRIB. Interacts with ARHGEF7 and GIT1. PAK-2p34 interacts with ARHGAP10. In terms of assembly, (Microbial infection) Interacts with and activated by HIV-1 Nef. Post-translationally, full-length PAK2 is autophosphorylated when activated by CDC42/p21. Following cleavage, both peptides, PAK-2p27 and PAK-2p34, become highly autophosphorylated, with PAK-2p27 being phosphorylated on serine and PAK-2p34 on threonine residues, respectively. Autophosphorylation of PAK-2p27 can occur in the absence of any effectors and is dependent on phosphorylation of Thr-402, because PAK-2p27 is acting as an exogenous substrate. In terms of processing, during apoptosis proteolytically cleaved by caspase-3 or caspase-3-like proteases to yield active PAK-2p34. Ubiquitinated, leading to its proteasomal degradation. Post-translationally, PAK-2p34 is myristoylated. As to expression, ubiquitously expressed. Higher levels seen in skeletal muscle, ovary, thymus and spleen.

The protein resides in the cytoplasm. It localises to the nucleus. It is found in the perinuclear region. Its subcellular location is the membrane. The enzyme catalyses L-seryl-[protein] + ATP = O-phospho-L-seryl-[protein] + ADP + H(+). It catalyses the reaction L-threonyl-[protein] + ATP = O-phospho-L-threonyl-[protein] + ADP + H(+). With respect to regulation, activated by binding small G proteins. Binding of GTP-bound CDC42 or RAC1 to the autoregulatory region releases monomers from the autoinhibited dimer, enables phosphorylation of Thr-402 and allows the kinase domain to adopt an active structure. Following caspase cleavage, autophosphorylated PAK-2p34 is constitutively active. In terms of biological role, serine/threonine protein kinase that plays a role in a variety of different signaling pathways including cytoskeleton regulation, cell motility, cell cycle progression, apoptosis or proliferation. Acts as a downstream effector of the small GTPases CDC42 and RAC1. Activation by the binding of active CDC42 and RAC1 results in a conformational change and a subsequent autophosphorylation on several serine and/or threonine residues. Full-length PAK2 stimulates cell survival and cell growth. Phosphorylates MAPK4 and MAPK6 and activates the downstream target MAPKAPK5, a regulator of F-actin polymerization and cell migration. Phosphorylates JUN and plays an important role in EGF-induced cell proliferation. Phosphorylates many other substrates including histone H4 to promote assembly of H3.3 and H4 into nucleosomes, BAD, ribosomal protein S6, or MBP. Phosphorylates CASP7, thereby preventing its activity. Additionally, associates with ARHGEF7 and GIT1 to perform kinase-independent functions such as spindle orientation control during mitosis. On the other hand, apoptotic stimuli such as DNA damage lead to caspase-mediated cleavage of PAK2, generating PAK-2p34, an active p34 fragment that translocates to the nucleus and promotes cellular apoptosis involving the JNK signaling pathway. Caspase-activated PAK2 phosphorylates MKNK1 and reduces cellular translation. The protein is Serine/threonine-protein kinase PAK 2 (PAK2) of Homo sapiens (Human).